Here is a 145-residue protein sequence, read N- to C-terminus: 3-hydroxyacyl-[acyl-carrier-protein] dehydratase FabZ (145 aa).

His49 is an active-site residue.

The protein belongs to the thioester dehydratase family. FabZ subfamily.

It is found in the cytoplasm. The enzyme catalyses a (3R)-hydroxyacyl-[ACP] = a (2E)-enoyl-[ACP] + H2O. Functionally, involved in unsaturated fatty acids biosynthesis. Catalyzes the dehydration of short chain beta-hydroxyacyl-ACPs and long chain saturated and unsaturated beta-hydroxyacyl-ACPs. The chain is 3-hydroxyacyl-[acyl-carrier-protein] dehydratase FabZ from Ehrlichia ruminantium (strain Welgevonden).